We begin with the raw amino-acid sequence, 294 residues long: Bifunctional protein FolD (294 aa).

Residues 166–168 (GRS), Ser191, and Ile232 each bind NADP(+).

Belongs to the tetrahydrofolate dehydrogenase/cyclohydrolase family. Homodimer.

It catalyses the reaction (6R)-5,10-methylene-5,6,7,8-tetrahydrofolate + NADP(+) = (6R)-5,10-methenyltetrahydrofolate + NADPH. The catalysed reaction is (6R)-5,10-methenyltetrahydrofolate + H2O = (6R)-10-formyltetrahydrofolate + H(+). Its pathway is one-carbon metabolism; tetrahydrofolate interconversion. Catalyzes the oxidation of 5,10-methylenetetrahydrofolate to 5,10-methenyltetrahydrofolate and then the hydrolysis of 5,10-methenyltetrahydrofolate to 10-formyltetrahydrofolate. The sequence is that of Bifunctional protein FolD from Nitrobacter winogradskyi (strain ATCC 25391 / DSM 10237 / CIP 104748 / NCIMB 11846 / Nb-255).